A 110-amino-acid chain; its full sequence is Ribonuclease P protein component 4 (110 aa).

C65, C68, C94, and C97 together coordinate Zn(2+).

Belongs to the eukaryotic/archaeal RNase P protein component 4 family. In terms of assembly, consists of a catalytic RNA component and at least 5 protein subunits. Requires Zn(2+) as cofactor.

The protein localises to the cytoplasm. The enzyme catalyses Endonucleolytic cleavage of RNA, removing 5'-extranucleotides from tRNA precursor.. Its function is as follows. Part of ribonuclease P, a protein complex that generates mature tRNA molecules by cleaving their 5'-ends. This chain is Ribonuclease P protein component 4, found in Methanococcus maripaludis (strain DSM 14266 / JCM 13030 / NBRC 101832 / S2 / LL).